Reading from the N-terminus, the 390-residue chain is Putative 8-amino-7-oxononanoate synthase (390 aa).

Position 20 (arginine 20) interacts with substrate. Position 107-108 (glycine 107–tyrosine 108) interacts with pyridoxal 5'-phosphate. Histidine 132 is a substrate binding site. Pyridoxal 5'-phosphate is bound by residues serine 181, aspartate 206–histidine 209, and threonine 237–lysine 240. At lysine 240 the chain carries N6-(pyridoxal phosphate)lysine. Residue threonine 356 participates in substrate binding.

Belongs to the class-II pyridoxal-phosphate-dependent aminotransferase family. BioF subfamily. As to quaternary structure, homodimer. It depends on pyridoxal 5'-phosphate as a cofactor.

It carries out the reaction 6-carboxyhexanoyl-[ACP] + L-alanine + H(+) = (8S)-8-amino-7-oxononanoate + holo-[ACP] + CO2. It functions in the pathway cofactor biosynthesis; biotin biosynthesis. In terms of biological role, catalyzes the decarboxylative condensation of pimeloyl-[acyl-carrier protein] and L-alanine to produce 8-amino-7-oxononanoate (AON), [acyl-carrier protein], and carbon dioxide. This chain is Putative 8-amino-7-oxononanoate synthase (bioF), found in Syntrophotalea carbinolica (strain DSM 2380 / NBRC 103641 / GraBd1) (Pelobacter carbinolicus).